The following is a 111-amino-acid chain: Latartoxin-2b (111 aa).

An N-terminal signal peptide occupies residues 1-19; sequence MKVLVIIALCFFILQTALS. Residues 20 to 43 constitute a propeptide, removed in mature form; it reads EDKYESFESYVEDLKSGNMKGEAR. A Processing quadruplet motif motif is present at residues 40 to 43; it reads GEAR. 5 cysteine pairs are disulfide-bonded: Cys-45-Cys-62, Cys-52-Cys-73, Cys-61-Cys-87, Cys-75-Cys-85, and Cys-78-Cys-99. Val-110 carries the post-translational modification Valine amide.

It belongs to the neurotoxin 19 (CSTX) family. 11 (latartoxin) subfamily. Contains 5 disulfide bonds. Post-translationally, cleavage of the propeptide depends on the processing quadruplet motif (XXXR, with at least one of X being E). Expressed by the venom gland.

Its subcellular location is the secreted. Its function is as follows. Insect toxin. This is Latartoxin-2b from Lachesana tarabaevi (Spider).